Here is a 295-residue protein sequence, read N- to C-terminus: Host-inducible protein A (295 aa).

Residues 1–20 form a disordered region; that stretch reads MHLDRSDSNGGSSRYTLDHE.

It belongs to the NopP family.

The polypeptide is Host-inducible protein A (Rhizobium fredii (Sinorhizobium fredii)).